Consider the following 443-residue polypeptide: Tol-Pal system protein TolB (443 aa).

Residues 1–33 form the signal peptide; the sequence is MKIGIINTKIRTVFSAFACMIAASLVCTMPARA.

This sequence belongs to the TolB family. As to quaternary structure, the Tol-Pal system is composed of five core proteins: the inner membrane proteins TolA, TolQ and TolR, the periplasmic protein TolB and the outer membrane protein Pal. They form a network linking the inner and outer membranes and the peptidoglycan layer.

The protein localises to the periplasm. Functionally, part of the Tol-Pal system, which plays a role in outer membrane invagination during cell division and is important for maintaining outer membrane integrity. This chain is Tol-Pal system protein TolB, found in Brucella ovis (strain ATCC 25840 / 63/290 / NCTC 10512).